The following is an 89-amino-acid chain: HssA/B-like protein 14 (89 aa).

Belongs to the hssA/B family.

This Dictyostelium discoideum (Social amoeba) protein is HssA/B-like protein 14 (hssl14).